A 195-amino-acid polypeptide reads, in one-letter code: Imidazoleglycerol-phosphate dehydratase (195 aa).

The protein belongs to the imidazoleglycerol-phosphate dehydratase family.

The protein localises to the cytoplasm. The catalysed reaction is D-erythro-1-(imidazol-4-yl)glycerol 3-phosphate = 3-(imidazol-4-yl)-2-oxopropyl phosphate + H2O. Its pathway is amino-acid biosynthesis; L-histidine biosynthesis; L-histidine from 5-phospho-alpha-D-ribose 1-diphosphate: step 6/9. The polypeptide is Imidazoleglycerol-phosphate dehydratase (Paraburkholderia xenovorans (strain LB400)).